Reading from the N-terminus, the 324-residue chain is tRNA dimethylallyltransferase (324 aa).

Gly15–Ser22 serves as a coordination point for ATP. Thr17 to Ser22 contacts substrate. The interval Asp40–Gln43 is interaction with substrate tRNA.

This sequence belongs to the IPP transferase family. In terms of assembly, monomer. It depends on Mg(2+) as a cofactor.

It catalyses the reaction adenosine(37) in tRNA + dimethylallyl diphosphate = N(6)-dimethylallyladenosine(37) in tRNA + diphosphate. In terms of biological role, catalyzes the transfer of a dimethylallyl group onto the adenine at position 37 in tRNAs that read codons beginning with uridine, leading to the formation of N6-(dimethylallyl)adenosine (i(6)A). This Moorella thermoacetica (strain ATCC 39073 / JCM 9320) protein is tRNA dimethylallyltransferase.